A 171-amino-acid polypeptide reads, in one-letter code: Ribosome maturation factor RimM (171 aa).

One can recognise a PRC barrel domain in the interval 98–170 (EGEFYLHQII…AVQVSVPEGL (73 aa)).

This sequence belongs to the RimM family. Binds ribosomal protein uS19.

The protein localises to the cytoplasm. In terms of biological role, an accessory protein needed during the final step in the assembly of 30S ribosomal subunit, possibly for assembly of the head region. Essential for efficient processing of 16S rRNA. May be needed both before and after RbfA during the maturation of 16S rRNA. It has affinity for free ribosomal 30S subunits but not for 70S ribosomes. This chain is Ribosome maturation factor RimM, found in Pediococcus pentosaceus (strain ATCC 25745 / CCUG 21536 / LMG 10740 / 183-1w).